A 239-amino-acid polypeptide reads, in one-letter code: Nicotinamide riboside transporter PnuC (239 aa).

At 1-21 (MDFFSVQNILVHIPIGAGGYD) the chain is on the cytoplasmic side. The helical transmembrane segment at 22–42 (LSWIEAVGTIAGLLCIGLASL) threads the bilayer. Topologically, residues 43 to 48 (EKISNY) are periplasmic. A helical transmembrane segment spans residues 49–68 (FFGLINVTLFGIIFFQIQLY). Residues 69–71 (ASL) are Cytoplasmic-facing. The helical transmembrane segment at 72–89 (LLQVFFFAANIYGWYAWS) threads the bilayer. Residues 90-109 (RQTSQNEAELKIRWLPLPKA) are Periplasmic-facing. A helical membrane pass occupies residues 110–127 (LSWLAVCVVSIGLMTVFI). The Cytoplasmic segment spans residues 128–157 (NPVFAFLTRVAVMIMQALGLQVVMPELQPD). A helical transmembrane segment spans residues 158–177 (AFPFWDSCMMVLSIVAMILM). At 178–183 (TRKYVE) the chain is on the periplasmic side. A helical membrane pass occupies residues 184–206 (NWLLWVIINVISVVIFALQGVYA). Beta-nicotinamide D-riboside-binding residues include tryptophan 188 and asparagine 192. Over 207–239 (MSLEYIILTFIALNGSRMWINSARERGSRALSH) the chain is Cytoplasmic.

This sequence belongs to the nicotinamide ribonucleoside (NR) uptake permease (TC 4.B.1) family.

The protein localises to the cell inner membrane. Required for nicotinamide riboside transport across the inner membrane. The sequence is that of Nicotinamide riboside transporter PnuC (pnuC) from Escherichia coli (strain K12).